A 284-amino-acid polypeptide reads, in one-letter code: Formamidopyrimidine-DNA glycosylase (284 aa).

Pro-2 functions as the Schiff-base intermediate with DNA in the catalytic mechanism. Glu-3 functions as the Proton donor in the catalytic mechanism. The active-site Proton donor; for beta-elimination activity is the Lys-61. Positions 95, 114, and 159 each coordinate DNA. Residues 244-278 (WVYGRKGQPCRVCNTPIERIRLAGRSTHFCPTCQR) form an FPG-type zinc finger. The Proton donor; for delta-elimination activity role is filled by Arg-268.

The protein belongs to the FPG family. In terms of assembly, monomer. Zn(2+) is required as a cofactor.

The catalysed reaction is Hydrolysis of DNA containing ring-opened 7-methylguanine residues, releasing 2,6-diamino-4-hydroxy-5-(N-methyl)formamidopyrimidine.. It catalyses the reaction 2'-deoxyribonucleotide-(2'-deoxyribose 5'-phosphate)-2'-deoxyribonucleotide-DNA = a 3'-end 2'-deoxyribonucleotide-(2,3-dehydro-2,3-deoxyribose 5'-phosphate)-DNA + a 5'-end 5'-phospho-2'-deoxyribonucleoside-DNA + H(+). In terms of biological role, involved in base excision repair of DNA damaged by oxidation or by mutagenic agents. Acts as a DNA glycosylase that recognizes and removes damaged bases. Has a preference for oxidized purines, such as 7,8-dihydro-8-oxoguanine (8-oxoG). Has AP (apurinic/apyrimidinic) lyase activity and introduces nicks in the DNA strand. Cleaves the DNA backbone by beta-delta elimination to generate a single-strand break at the site of the removed base with both 3'- and 5'-phosphates. This is Formamidopyrimidine-DNA glycosylase from Gloeobacter violaceus (strain ATCC 29082 / PCC 7421).